Here is a 255-residue protein sequence, read N- to C-terminus: uncharacterized protein (255 aa).

Residues Met-1 to Met-22 form the signal peptide.

This is an uncharacterized protein from Acanthamoeba polyphaga (Amoeba).